A 146-amino-acid polypeptide reads, in one-letter code: MLPLSLLKTAQGHPMLVELKNGETYNGHLVNCDTWMNIHLREVICTSKDGDRFWRMPECYVRGNTIKYLRVPDEVIDKVQEEAKSRTDRKPPGVGRARARGGRDDSAVGRQPKGIGRGMDDGGAKGRGKGGPSAKSGGRGGGRGRG.

The 74-residue stretch at 2 to 75 (LPLSLLKTAQ…IKYLRVPDEV (74 aa)) folds into the Sm domain. Basic and acidic residues predominate over residues 80 to 91 (QEEAKSRTDRKP). The disordered stretch occupies residues 80-146 (QEEAKSRTDR…GGRGGGRGRG (67 aa)). Gly residues predominate over residues 137 to 146 (GGRGGGRGRG).

This sequence belongs to the snRNP Sm proteins family. In terms of assembly, LSm subunits form a heteromer with a doughnut shape.

Its subcellular location is the nucleus. Binds specifically to the 3'-terminal U-tract of U6 snRNA. This Nicotiana tabacum (Common tobacco) protein is Probable U6 snRNA-associated Sm-like protein LSm4.